The sequence spans 398 residues: Streptopain (398 aa).

The first 27 residues, 1-27 (MNKKKLGVRLLSLLALGGFVLANPVFA), serve as a signal peptide directing secretion. A propeptide spanning residues 28-145 (DQNFARNEKE…TTYAGTAEIK (118 aa)) is cleaved from the precursor. Cysteine 192 (nucleophile) is an active-site residue. Residue cysteine 192 is modified to Cysteine methyl disulfide; in zymogen form. Residues serine 282 and glycine 339 each contribute to the a protein site. Histidine 340 acts as the Proton acceptor in catalysis. Residues 368–390 (RLDALNPSALGTGGGAGGFNGYQ) are C-terminal active site loop.

The protein belongs to the peptidase C10 family. As to quaternary structure, monomer. In terms of processing, the mature protease is derived from the precursor sequence by cleavage, either in cis via an autocatalytic mechanism, or in trans by mature SpeB or host proteases (trypsin, plasmin or subtilisin). Maturation can involve a number of protein cleavage intermediates. Mature SpeB probably plays the most important role in protein maturation in physiological conditions. Methylthiolation at Cys-192 of the inactive zymogen form is probably involved in the mechanism of secretion of the proteinase into the culture fluid.

The protein localises to the secreted. Its subcellular location is the host extracellular space. It is found in the host cytoplasm. The enzyme catalyses Preferential cleavage with hydrophobic residues at P2, P1 and P1'.. With respect to regulation, synthesized as an inactive zymogen to protect the intracellular components of the bacteria from proteolytic activity during protein production. Once secreted into the extracellular milieu, cleaved into the active protease: maturation can be mediated in cis by autocatalytic cleavage, or in trans by mature SpeB or host proteases. Protease activity is strongly inhibited by zinc and copper, which prevent its maturation into an active protease: inhibition by metal ions may be required to prevent proteolysis of streptococcal proteins. Cysteine protease that acts as a key streptococcal virulence factor by cleaving host proteins involved in immune response. Triggers inflammation by mediating cleavage of host proteins, which can both promote host pathogenesis by triggering sterile inflammation and/or restrict streptococcal infection, depending on host immune statue and infection site. Cleaves host gasdermin-A (GSDMA) in epithelial cells, promoting GSDMA activation and formation of gasdermin pores, triggering pyroptosis. Pyroptosis triggers the elimination of the infected skin cell, depriving the pathogen of its protective niche, while inducing an inflammatory response. This ultimately prevents bacterial penetration of the epithelial barrier and a subsequent systemic dissemination of the pathogen. Also mediates cleavage of the cytokine precursor interleukin-1 beta (IL1B) to its mature form, resulting in inflammation and septic shock. SpeB-mediated maturation of IL1B plays a dual role depending on infection site: while IL1B inflammatory response prevents bacterial growth during invasive skin infections, it promotes streptococcal infection of the nasopharynx by disrupting colonization resistance mediated by the microbiota. Inhibits host autophagy be catalyzing cleavage and inactivation of key autophagy factors, such as CALCOCO2, NBR1 and SQSTM1. Cleaves and inhibits a number of complement factors, such as C2, C3-beta chain of C3, C4, C5 or SERPING1, thereby promoting evasion of host immunity. May also impair adaptive immunity by catalyzing cleavage and degradation of host immunoglobulins to promote immune system evasion; the relevance of this activity is however unsure in vivo. Catalyzes maturation and release of the peptide hormone bradykinin from the precursor Kininogen-1 (KNG1) to produce hypotension during septic shock. Also involved in bacterial translocation across the host epithelial barrier by mediating cleavage and degradation of host epithelial junction proteins, such as CDH1 and OCLN. Additionally, has been involved in degradation of fibronectin and vitronectin, two host extracellular matrix proteins involved in tissue integrity. Also able to catalyze cleavage and degradation of streptococcal proteins, such as C5a peptidase, EndoS or SmeZ. Degradation of streptococcal proteins is however strictly regulated to preserve integrity of other virulence factors. The sequence is that of Streptopain from Streptococcus pyogenes serotype M1.